The primary structure comprises 79 residues: UPF0154 protein SAK_1616 (79 aa).

Residues 5-25 (IWILLIIVALFGGLVGGIFIA) traverse the membrane as a helical segment.

Belongs to the UPF0154 family.

The protein resides in the cell membrane. This chain is UPF0154 protein SAK_1616, found in Streptococcus agalactiae serotype Ia (strain ATCC 27591 / A909 / CDC SS700).